Reading from the N-terminus, the 179-residue chain is ATP synthase subunit delta (179 aa).

The protein belongs to the ATPase delta chain family. F-type ATPases have 2 components, F(1) - the catalytic core - and F(0) - the membrane proton channel. F(1) has five subunits: alpha(3), beta(3), gamma(1), delta(1), epsilon(1). F(0) has three main subunits: a(1), b(2) and c(10-14). The alpha and beta chains form an alternating ring which encloses part of the gamma chain. F(1) is attached to F(0) by a central stalk formed by the gamma and epsilon chains, while a peripheral stalk is formed by the delta and b chains.

Its subcellular location is the cell inner membrane. F(1)F(0) ATP synthase produces ATP from ADP in the presence of a proton or sodium gradient. F-type ATPases consist of two structural domains, F(1) containing the extramembraneous catalytic core and F(0) containing the membrane proton channel, linked together by a central stalk and a peripheral stalk. During catalysis, ATP synthesis in the catalytic domain of F(1) is coupled via a rotary mechanism of the central stalk subunits to proton translocation. Functionally, this protein is part of the stalk that links CF(0) to CF(1). It either transmits conformational changes from CF(0) to CF(1) or is implicated in proton conduction. This is ATP synthase subunit delta from Alkalilimnicola ehrlichii (strain ATCC BAA-1101 / DSM 17681 / MLHE-1).